Consider the following 349-residue polypeptide: uncharacterized protein (349 aa).

The segment covering 116–135 (HFSQTNPKSTPEPPCTSSSG) has biased composition (polar residues). The segment at 116–148 (HFSQTNPKSTPEPPCTSSSGAGDCHENLPADGY) is disordered.

This is an uncharacterized protein from Caenorhabditis elegans.